Consider the following 433-residue polypeptide: D-amino acid dehydrogenase (433 aa).

FAD is bound at residue 3-17 (VLVLGSGVIGTTSAY).

It belongs to the DadA oxidoreductase family. FAD serves as cofactor.

It carries out the reaction a D-alpha-amino acid + A + H2O = a 2-oxocarboxylate + AH2 + NH4(+). Oxidative deamination of D-amino acids. This is D-amino acid dehydrogenase from Pseudomonas syringae pv. tomato (strain ATCC BAA-871 / DC3000).